Consider the following 439-residue polypeptide: Glutamyl-tRNA reductase (439 aa).

Substrate-binding positions include 46–49, S111, 116–118, and Q122; these read TCNR and EGE. Catalysis depends on C47, which acts as the Nucleophile. Position 191–196 (191–196) interacts with NADP(+); sequence GTGAYA.

It belongs to the glutamyl-tRNA reductase family. Homodimer.

The enzyme catalyses (S)-4-amino-5-oxopentanoate + tRNA(Glu) + NADP(+) = L-glutamyl-tRNA(Glu) + NADPH + H(+). Its pathway is porphyrin-containing compound metabolism; protoporphyrin-IX biosynthesis; 5-aminolevulinate from L-glutamyl-tRNA(Glu): step 1/2. In terms of biological role, catalyzes the NADPH-dependent reduction of glutamyl-tRNA(Glu) to glutamate 1-semialdehyde (GSA). The sequence is that of Glutamyl-tRNA reductase from Clavibacter michiganensis subsp. michiganensis (strain NCPPB 382).